The chain runs to 533 residues: Phosphatidylinositol 4-kinase gamma 8 (533 aa).

One can recognise a PI3K/PI4K catalytic domain in the interval 101–397; that stretch reads GAQPLLLPSG…AVSGSDDDDD (297 aa). Residues 107-113 are G-loop; the sequence is LPSGLGG. Residues 108–114, Lys-129, and 210–213 contribute to the ATP site; these read PSGLGGA and QRFV. Residues 243–251 form a catalytic loop region; that stretch reads LNLDRHAGN. Residues 276–302 form an activation loop region; the sequence is PIDHGLCLPECLDDPYFEWLNWPQASV. An ATP-binding site is contributed by Asp-278.

It belongs to the PI3/PI4-kinase family. Type II PI4K subfamily.

It carries out the reaction a 1,2-diacyl-sn-glycero-3-phospho-(1D-myo-inositol) + ATP = a 1,2-diacyl-sn-glycero-3-phospho-(1D-myo-inositol 4-phosphate) + ADP + H(+). The phosphorylation of phosphatidylinositol (PI) to PI4P is the first committed step in the generation of phosphatidylinositol 4,5-bisphosphate (PIP2), a precursor of the second messenger inositol 1,4,5-trisphosphate (InsP3). The chain is Phosphatidylinositol 4-kinase gamma 8 (PI4KG8) from Arabidopsis thaliana (Mouse-ear cress).